Here is an 828-residue protein sequence, read N- to C-terminus: Periplasmic nitrate reductase (828 aa).

The segment at residues 1-31 (MKLSRRSFMKANAVAAAAAAAGLSVPGVARA) is a signal peptide (tat-type signal). Residues 39 to 95 (IKWDKAPCRFCGTGCGVLVGTQQGRVVACQGDPDAPVNRGLNCIKGYFLPKIMYGKD) form the 4Fe-4S Mo/W bis-MGD-type domain. Residues Cys-46, Cys-49, Cys-53, and Cys-81 each contribute to the [4Fe-4S] cluster site. Mo-bis(molybdopterin guanine dinucleotide) contacts are provided by residues Lys-83, Gln-150, Asn-175, Cys-179, 212 to 219 (WGANMAEM), 243 to 247 (STYQH), 262 to 264 (QSD), Met-372, Gln-376, Asn-482, 508 to 509 (SD), Lys-531, Asp-558, and 718 to 727 (TGRVLEHWHT). Phe-794 lines the substrate pocket. 2 residues coordinate Mo-bis(molybdopterin guanine dinucleotide): Asn-802 and Lys-819.

It belongs to the prokaryotic molybdopterin-containing oxidoreductase family. NasA/NapA/NarB subfamily. Component of the periplasmic nitrate reductase NapAB complex composed of NapA and NapB. [4Fe-4S] cluster serves as cofactor. The cofactor is Mo-bis(molybdopterin guanine dinucleotide). Post-translationally, predicted to be exported by the Tat system. The position of the signal peptide cleavage has not been experimentally proven.

The protein resides in the periplasm. It carries out the reaction 2 Fe(II)-[cytochrome] + nitrate + 2 H(+) = 2 Fe(III)-[cytochrome] + nitrite + H2O. In terms of biological role, catalytic subunit of the periplasmic nitrate reductase complex NapAB. Receives electrons from NapB and catalyzes the reduction of nitrate to nitrite. The polypeptide is Periplasmic nitrate reductase (Escherichia coli O6:K15:H31 (strain 536 / UPEC)).